Reading from the N-terminus, the 530-residue chain is Glutamyl-tRNA reductase 2, chloroplastic (530 aa).

The transit peptide at 1-64 (MAVSSAFVVT…RCEISPSNKA (64 aa)) directs the protein to the chloroplast. Substrate contacts are provided by residues 134–137 (TCNR), Ser194, 199–201 (EGQ), and Gln205. Cys135 acts as the Nucleophile in catalysis. 277 to 282 (GAGKMG) serves as a coordination point for NADP(+).

The protein belongs to the glutamyl-tRNA reductase family. In terms of tissue distribution, expressed in roots and flowers. Detected in leaves, hypocotyls and cotyledons.

It is found in the plastid. Its subcellular location is the chloroplast. The catalysed reaction is (S)-4-amino-5-oxopentanoate + tRNA(Glu) + NADP(+) = L-glutamyl-tRNA(Glu) + NADPH + H(+). Its pathway is porphyrin-containing compound metabolism; protoporphyrin-IX biosynthesis; 5-aminolevulinate from L-glutamyl-tRNA(Glu): step 1/2. It participates in porphyrin-containing compound metabolism; chlorophyll biosynthesis. In terms of biological role, catalyzes the NADPH-dependent reduction of glutamyl-tRNA(Glu) to glutamate 1-semialdehyde (GSA). Probably involved in wound-induced supply of heme to defensive hemoproteins outside plastids. The sequence is that of Glutamyl-tRNA reductase 2, chloroplastic (HEMA2) from Arabidopsis thaliana (Mouse-ear cress).